The sequence spans 176 residues: Flavodoxin-like domain-containing protein BilS (176 aa).

It functions in the pathway porphyrin-containing compound metabolism; protoheme degradation. Its function is as follows. Together with BilR, catalyzes reduction of mesobilirubin and/or bilirubin to urobilinogen, a key step during heme degradation. BilS is probably involved in electron transfer for the bilirubin reductase BilR. The protein is Flavodoxin-like domain-containing protein BilS of Clostridioides difficile (strain CD3).